Reading from the N-terminus, the 94-residue chain is Sec-independent protein translocase protein TatA (94 aa).

A helical membrane pass occupies residues 1 to 21 (MFGRLGAPEIILILVVIILLF). The disordered stretch occupies residues 44–94 (AKAMKSEGQESTPAGPPNTDEQPPAQRTIQAAPGDVTSSRPVSEPTDTTKR). Residues 62-72 (TDEQPPAQRTI) are compositionally biased toward polar residues.

The protein belongs to the TatA/E family. The Tat system comprises two distinct complexes: a TatABC complex, containing multiple copies of TatA, TatB and TatC subunits, and a separate TatA complex, containing only TatA subunits. Substrates initially bind to the TatABC complex, which probably triggers association of the separate TatA complex to form the active translocon.

The protein resides in the cell membrane. Functionally, part of the twin-arginine translocation (Tat) system that transports large folded proteins containing a characteristic twin-arginine motif in their signal peptide across membranes. TatA could form the protein-conducting channel of the Tat system. The chain is Sec-independent protein translocase protein TatA from Streptomyces avermitilis (strain ATCC 31267 / DSM 46492 / JCM 5070 / NBRC 14893 / NCIMB 12804 / NRRL 8165 / MA-4680).